The sequence spans 1095 residues: DNA polymerase delta catalytic subunit (1095 aa).

The span at 1-11 (MNRSGISKKRP) shows a compositional bias: basic residues. Residues 1-37 (MNRSGISKKRPPPSNTPPPAGKHRATGDSTPSPAIGT) form a disordered region. Cysteine 1007, cysteine 1010, cysteine 1020, and cysteine 1023 together coordinate Zn(2+). Residues 1007 to 1023 (CVGCKVPISNGTLCASC) form a CysA-type zinc finger. The [4Fe-4S] cluster site is built by cysteine 1052, cysteine 1055, cysteine 1065, and cysteine 1070. A CysB motif motif is present at residues 1052 to 1070 (CQECQGSLHQDVLCTSRDC).

The protein belongs to the DNA polymerase type-B family. In terms of assembly, heterodimer with subunits of 125 kDa and 50 kDa. The 125 kDa subunit contains the polymerase active site and most likely the active site for the 3'-5' exonuclease activity. It depends on [4Fe-4S] cluster as a cofactor.

Its subcellular location is the nucleus. It catalyses the reaction DNA(n) + a 2'-deoxyribonucleoside 5'-triphosphate = DNA(n+1) + diphosphate. In terms of biological role, this polymerase possesses two enzymatic activities: DNA synthesis (polymerase) and an exonucleolytic activity that degrades single-stranded DNA in the 3'- to 5'-direction. This is DNA polymerase delta catalytic subunit (POLD1) from Arabidopsis thaliana (Mouse-ear cress).